The sequence spans 439 residues: Chitinase-like protein Idgf1 (439 aa).

The first 20 residues, 1-20 (MRFQLFYILGLLSVTSLTQA), serve as a signal peptide directing secretion. Positions 22-439 (NNLVCYYDST…IVRSIKYFMG (418 aa)) constitute a GH18 domain. An intrachain disulfide couples cysteine 26 to cysteine 53. N-linked (GlcNAc...) asparagine glycans are attached at residues asparagine 122, asparagine 218, and asparagine 346. Cysteine 340 and cysteine 423 form a disulfide bridge.

It belongs to the glycosyl hydrolase 18 family. IDGF subfamily. Glycosylated.

It is found in the secreted. In terms of biological role, cooperates with insulin-like peptides to stimulate the proliferation, polarization and motility of imaginal disk cells. May act by stabilizing the binding of insulin-like peptides to its receptor through a simultaneous interaction with both molecules to form a multiprotein signaling complex. This is Chitinase-like protein Idgf1 (Idgf1) from Drosophila simulans (Fruit fly).